Consider the following 335-residue polypeptide: Glycerol-3-phosphate dehydrogenase [NAD(P)+] (335 aa).

Residues serine 15, tyrosine 16, histidine 36, and lysine 110 each coordinate NADPH. Sn-glycerol 3-phosphate-binding residues include lysine 110, glycine 139, and threonine 141. Alanine 143 is an NADPH binding site. Residues lysine 195, aspartate 248, serine 258, arginine 259, and asparagine 260 each contribute to the sn-glycerol 3-phosphate site. The active-site Proton acceptor is the lysine 195. NADPH is bound at residue arginine 259. Valine 283 and glutamate 285 together coordinate NADPH.

The protein belongs to the NAD-dependent glycerol-3-phosphate dehydrogenase family.

The protein resides in the cytoplasm. The catalysed reaction is sn-glycerol 3-phosphate + NAD(+) = dihydroxyacetone phosphate + NADH + H(+). It carries out the reaction sn-glycerol 3-phosphate + NADP(+) = dihydroxyacetone phosphate + NADPH + H(+). It participates in membrane lipid metabolism; glycerophospholipid metabolism. Catalyzes the reduction of the glycolytic intermediate dihydroxyacetone phosphate (DHAP) to sn-glycerol 3-phosphate (G3P), the key precursor for phospholipid synthesis. The chain is Glycerol-3-phosphate dehydrogenase [NAD(P)+] from Haemophilus influenzae (strain 86-028NP).